The following is a 362-amino-acid chain: MSSNRKDDHVRHAVDQHRDRTPVNDFDAIGFQHHALAGIDAADVDLGVDIAGKRWHTPLFINAMTGGSAAATDINRGLAIAARETGLPVASGSLSAYFRDPGLAGSFRVLREENPHGVVIANVNATATLDQARRAVDLLAADALQIHLNAVQEIVMPEGDRSFRSWPRRIEHLAAGVPVPVIVKEVGFGLSRPTVAWLRDAGVAVADVGGRGGTNFARIENDRRPAADFSFLDTWGQSTPACLLDSAEVTGIALVASGGIRSPLDVAKALALGADATGVAGRFLATLLDRGAEGLIETIRAWLDQLRSIATVLGAATPADLRRCDLLITGEVAAFCRLRGIDAAAYAHRSHWWHPSERRSLL.

Position 5-6 (Arg5–Lys6) interacts with substrate. Residues Ala63 to Thr65, Ser93, and Asn122 each bind FMN. Substrate is bound at residue Gln152. Residue Glu153 participates in Mg(2+) binding. FMN contacts are provided by residues Lys184, Thr214, Gly259–Arg261, and Ala280–Gly281.

This sequence belongs to the IPP isomerase type 2 family. Homooctamer. Dimer of tetramers. Requires FMN as cofactor. NADPH serves as cofactor. It depends on Mg(2+) as a cofactor.

Its subcellular location is the cytoplasm. It catalyses the reaction isopentenyl diphosphate = dimethylallyl diphosphate. In terms of biological role, involved in the biosynthesis of isoprenoids. Catalyzes the 1,3-allylic rearrangement of the homoallylic substrate isopentenyl (IPP) to its allylic isomer, dimethylallyl diphosphate (DMAPP). The sequence is that of Isopentenyl-diphosphate delta-isomerase from Nocardia farcinica (strain IFM 10152).